The sequence spans 137 residues: Proofreading thioesterase EntH (137 aa).

The active-site Nucleophile or proton acceptor is the E63.

It belongs to the thioesterase PaaI family. Homotetramer. Dimer of dimers. Interacts specifically with the aryl carrier protein (ArCP) domain of EntB.

It localises to the cytoplasm. Its pathway is siderophore biosynthesis; enterobactin biosynthesis. Functionally, required for optimal enterobactin synthesis. Acts as a proofreading enzyme that prevents EntB misacylation by hydrolyzing the thioester bound existing between EntB and wrongly charged molecules. This chain is Proofreading thioesterase EntH, found in Citrobacter koseri (strain ATCC BAA-895 / CDC 4225-83 / SGSC4696).